Consider the following 133-residue polypeptide: Small ribosomal subunit protein uS11 (133 aa).

Belongs to the universal ribosomal protein uS11 family. In terms of assembly, part of the 30S ribosomal subunit. Interacts with proteins S7 and S18. Binds to IF-3.

Its function is as follows. Located on the platform of the 30S subunit, it bridges several disparate RNA helices of the 16S rRNA. Forms part of the Shine-Dalgarno cleft in the 70S ribosome. The sequence is that of Small ribosomal subunit protein uS11 from Bordetella avium (strain 197N).